Consider the following 405-residue polypeptide: Imidazolonepropionase (405 aa).

Fe(3+) is bound by residues histidine 73 and histidine 75. Zn(2+) contacts are provided by histidine 73 and histidine 75. Arginine 82, tyrosine 145, and histidine 178 together coordinate 4-imidazolone-5-propanoate. Tyrosine 145 is an N-formimidoyl-L-glutamate binding site. Residue histidine 243 participates in Fe(3+) binding. Histidine 243 is a Zn(2+) binding site. Glutamine 246 contributes to the 4-imidazolone-5-propanoate binding site. Residue aspartate 318 participates in Fe(3+) binding. Residue aspartate 318 participates in Zn(2+) binding. Residues asparagine 320 and glycine 322 each coordinate N-formimidoyl-L-glutamate. Threonine 323 serves as a coordination point for 4-imidazolone-5-propanoate.

Belongs to the metallo-dependent hydrolases superfamily. HutI family. The cofactor is Zn(2+). Fe(3+) serves as cofactor.

It localises to the cytoplasm. The enzyme catalyses 4-imidazolone-5-propanoate + H2O = N-formimidoyl-L-glutamate. Its pathway is amino-acid degradation; L-histidine degradation into L-glutamate; N-formimidoyl-L-glutamate from L-histidine: step 3/3. In terms of biological role, catalyzes the hydrolytic cleavage of the carbon-nitrogen bond in imidazolone-5-propanoate to yield N-formimidoyl-L-glutamate. It is the third step in the universal histidine degradation pathway. In Brucella abortus (strain S19), this protein is Imidazolonepropionase.